The primary structure comprises 131 residues: Profilin (131 aa).

It belongs to the profilin family. In terms of assembly, occurs in many kinds of cells as a complex with monomeric actin in a 1:1 ratio.

It is found in the cytoplasm. It localises to the cytoskeleton. In terms of biological role, binds to actin and affects the structure of the cytoskeleton. At high concentrations, profilin prevents the polymerization of actin, whereas it enhances it at low concentrations. By binding to PIP2, it inhibits the formation of IP3 and DG. The polypeptide is Profilin (Citrus sinensis (Sweet orange)).